We begin with the raw amino-acid sequence, 362 residues long: Atypical chemokine receptor 3 (362 aa).

Over 1–47 (MDVHLFDYAEPGNYSDINWPCNSSDCIVVDTVQCPTMPNKNVLLYTL) the chain is Extracellular. Asn-13 and Asn-22 each carry an N-linked (GlcNAc...) asparagine glycan. Residues 48-68 (SFIYIFIFVIGMIANSVVVWV) form a helical membrane-spanning segment. Residues 69-81 (NIQAKTTGYDTHC) lie on the Cytoplasmic side of the membrane. The helical transmembrane segment at 82–102 (YILNLAIADLWVVITIPVWVV) threads the bilayer. Topologically, residues 103–118 (SLVQHNQWPMGELTCK) are extracellular. A disulfide bridge connects residues Cys-117 and Cys-196. Residues 119–139 (ITHLIFSINLFGSIFFLACMS) form a helical membrane-spanning segment. The Cytoplasmic segment spans residues 140 to 162 (VDRYLSITYFTGTSSYKKKMVRR). Residues 163 to 183 (VVCILVWLLAFFVSLPDTYYL) traverse the membrane as a helical segment. Residues 184–213 (KTVTSASNNETYCRSFYPEHSIKEWLIGME) lie on the Extracellular side of the membrane. The helical transmembrane segment at 214 to 234 (LVSVILGFAVPFTIIAIFYFL) threads the bilayer. The Cytoplasmic segment spans residues 235-252 (LARAMSASGDQEKHSSRK). A helical transmembrane segment spans residues 253–273 (IIFSYVVVFLVCWLPYHFVVL). Residues 274-296 (LDIFSILHYIPFTCQLENVLFTA) are Extracellular-facing. The chain crosses the membrane as a helical span at residues 297-319 (LHVTQCLSLVHCCVNPVLYSFIN). Topologically, residues 320-362 (RNYRYELMKAFIFKYSAKTGLTKLIDASRVSETEYSALEQNTK) are cytoplasmic. The segment at 324-362 (YELMKAFIFKYSAKTGLTKLIDASRVSETEYSALEQNTK) is C-terminal cytoplasmic tail. Ser-347, Ser-350, and Ser-355 each carry phosphoserine.

Belongs to the G-protein coupled receptor 1 family. Atypical chemokine receptor subfamily. As to quaternary structure, homodimer. Can form heterodimers with CXCR4; heterodimerization may regulate CXCR4 signaling activity. Interacts with ARRB1 and ARRB2. The Ser/Thr residues in the C-terminal cytoplasmic tail may be phosphorylated. Post-translationally, ubiquitinated at the Lys residues in its C-terminal cytoplasmic tail and is essential for correct trafficking from and to the cell membrane. Deubiquitinated by CXCL12-stimulation in a reversible manner. In terms of tissue distribution, not detected in blood, liver, lung and heart, but high expression detected in several tumor cell lines (at protein level). Expressed in heart, spleen, kidney, lung, ovary, brain, testis, astrocytes, neutrophils and B-lymphocytes.

It localises to the cell membrane. Its subcellular location is the early endosome. The protein localises to the recycling endosome. In terms of biological role, atypical chemokine receptor that controls chemokine levels and localization via high-affinity chemokine binding that is uncoupled from classic ligand-driven signal transduction cascades, resulting instead in chemokine sequestration, degradation, or transcytosis. Also known as interceptor (internalizing receptor) or chemokine-scavenging receptor or chemokine decoy receptor. Acts as a receptor for chemokines CXCL11 and CXCL12/SDF1. Chemokine binding does not activate G-protein-mediated signal transduction but instead induces beta-arrestin recruitment, leading to ligand internalization and activation of MAPK signaling pathway. Required for regulation of CXCR4 protein levels in migrating interneurons, thereby adapting their chemokine responsiveness. In glioma cells, transduces signals via MEK/ERK pathway, mediating resistance to apoptosis. Promotes cell growth and survival. Not involved in cell migration, adhesion or proliferation of normal hematopoietic progenitors but activated by CXCL11 in malignant hemapoietic cells, leading to phosphorylation of ERK1/2 (MAPK3/MAPK1) and enhanced cell adhesion and migration. Plays a regulatory role in CXCR4-mediated activation of cell surface integrins by CXCL12. Required for heart valve development. Regulates axon guidance in the oculomotor system through the regulation of CXCL12 levels. The chain is Atypical chemokine receptor 3 from Mus musculus (Mouse).